A 393-amino-acid chain; its full sequence is Chorismate synthase (393 aa).

NADP(+)-binding residues include arginine 40 and arginine 46. Residues 129–131, 250–251, glycine 301, 316–320, and arginine 342 contribute to the FMN site; these read RAS, QA, and KPIST.

The protein belongs to the chorismate synthase family. Homotetramer. FMNH2 is required as a cofactor.

It carries out the reaction 5-O-(1-carboxyvinyl)-3-phosphoshikimate = chorismate + phosphate. The protein operates within metabolic intermediate biosynthesis; chorismate biosynthesis; chorismate from D-erythrose 4-phosphate and phosphoenolpyruvate: step 7/7. Functionally, catalyzes the anti-1,4-elimination of the C-3 phosphate and the C-6 proR hydrogen from 5-enolpyruvylshikimate-3-phosphate (EPSP) to yield chorismate, which is the branch point compound that serves as the starting substrate for the three terminal pathways of aromatic amino acid biosynthesis. This reaction introduces a second double bond into the aromatic ring system. The protein is Chorismate synthase of Acidobacterium capsulatum (strain ATCC 51196 / DSM 11244 / BCRC 80197 / JCM 7670 / NBRC 15755 / NCIMB 13165 / 161).